A 474-amino-acid polypeptide reads, in one-letter code: Receptor-transporting protein 3 (474 aa).

Over 1-453 the chain is Cytoplasmic; the sequence is MMEEDIGDTE…SCCEAACNCM (453 aa). The 3CxxC-type zinc finger occupies 53 to 164; that stretch reads TFARFHCPSC…SSNCEACLLG (112 aa). Residues 175-304 are disordered; the sequence is SKPPAPPLSP…ISCTSKPSTT (130 aa). Composition is skewed to polar residues over residues 197–228 and 259–304; these read VTCSNISSSRPSSKVQMPQASKVNPQASNPTK and VTCS…PSTT. The helical transmembrane segment at 454–474 threads the bilayer; sequence SQSPLCCLAFLILFLLLWYLL.

The protein belongs to the TMEM7 family. Interacts with TAS2R16. As to expression, expressed predominantly in the liver. Not detected in the olfactory epithelium.

The protein localises to the membrane. Its function is as follows. Promotes functional cell surface expression of the bitter taste receptors TAS2R16 and TAS2R43. This Mus musculus (Mouse) protein is Receptor-transporting protein 3 (Rtp3).